The sequence spans 531 residues: MASPVADASRRRREKRRQLDARRSKCRIRLGGHMEQWCLLKERLGFSLHSQLAKFLLDRYTSSGCVLCAAPEPGPRKGLQYLVLLSHTHSRECGLVPGLRGPGGGEGELVWECSAGHTFSWEPSLIPAPSDVPKQAPLTHTTERAWCSEARRKQEAQGLECEQRERTQETRLSRRVDSPLEIDPPLGEDQDVEEEEEEEEEEEELLSDASPWTYSSSPDDSEPDVPRPPPSPVTHTPKEGEVSPVPATLPTPCAVLASVGSPDALTSDTEVRLELSRTPQVPAELHMTESLESPGSQAQSAPNPTWDEDTAQIGLRRIRKAAKRELMPCDFPGCGRIFSNRQYLNHHKKYQHIHQKSFCCPEPACGKSFNFKKHLKEHVKLHSDTRDYICEFCARSFRTSSNLVIHRRIHTGEKPLQCEICGFTCRQKASLNWHRRKHAETAAALRFPCEFCGKRFEKPDSVVAHCSKSHPALLPAQEPPGSLVSSPSISAPESLQSPEGASISTTSDSNPASSTSISSPGVPDPRNREKS.

Residues 155-178 (EAQGLECEQRERTQETRLSRRVDS) show a composition bias toward basic and acidic residues. Disordered regions lie at residues 155–249 (EAQG…PATL) and 287–307 (MTES…PTWD). The span at 186 to 206 (LGEDQDVEEEEEEEEEEEELL) shows a compositional bias: acidic residues. Serine 231 is modified (phosphoserine). Polar residues predominate over residues 290 to 303 (SLESPGSQAQSAPN). 5 C2H2-type zinc fingers span residues 327-352 (MPCD…KYQH), 358-382 (FCCP…VKLH), 388-410 (YICE…RRIH), 416-438 (LQCE…RRKH), and 447-470 (FPCE…SKSH). At serine 469 the chain carries Phosphoserine. The tract at residues 474–531 (LPAQEPPGSLVSSPSISAPESLQSPEGASISTTSDSNPASSTSISSPGVPDPRNREKS) is disordered. The span at 483–499 (LVSSPSISAPESLQSPE) shows a compositional bias: polar residues. Residues 502 to 520 (SISTTSDSNPASSTSISSP) show a composition bias toward low complexity.

It belongs to the krueppel C2H2-type zinc-finger protein family. Post-translationally, phosphorylation at Ser-469 results in loss of DNA-binding activity.

It is found in the nucleus. In terms of biological role, may act as an transcriptional repressor for PCK1 gene expression, in turn may participate in the hepatic gluconeogenesis regulation through the activated AMPK signaling pathway. The polypeptide is Zinc finger protein 692 (Mus musculus (Mouse)).